The following is a 669-amino-acid chain: Methionine--tRNA ligase (669 aa).

The 'HIGH' region motif lies at Tyr-14–Asn-24. His-161 serves as a coordination point for Zn(2+). Positions Lys-309 to Ser-313 match the 'KMSKS' region motif. ATP is bound at residue Lys-312. The 104-residue stretch at Asp-566 to Ala-669 folds into the tRNA-binding domain.

It belongs to the class-I aminoacyl-tRNA synthetase family. MetG type 2B subfamily. In terms of assembly, homodimer.

Its subcellular location is the cytoplasm. The enzyme catalyses tRNA(Met) + L-methionine + ATP = L-methionyl-tRNA(Met) + AMP + diphosphate. Functionally, is required not only for elongation of protein synthesis but also for the initiation of all mRNA translation through initiator tRNA(fMet) aminoacylation. The protein is Methionine--tRNA ligase of Enterococcus faecalis (strain ATCC 700802 / V583).